The chain runs to 407 residues: Peptidase T (407 aa).

Position 82 (H82) interacts with Zn(2+). D84 is an active-site residue. D143 contributes to the Zn(2+) binding site. Catalysis depends on E177, which acts as the Proton acceptor. E178, D200, and H382 together coordinate Zn(2+).

The protein belongs to the peptidase M20B family. Zn(2+) serves as cofactor.

The protein resides in the cytoplasm. The enzyme catalyses Release of the N-terminal residue from a tripeptide.. Cleaves the N-terminal amino acid of tripeptides. This chain is Peptidase T, found in Streptococcus pyogenes serotype M49 (strain NZ131).